The primary structure comprises 144 residues: Large ribosomal subunit protein uL13 (144 aa).

This sequence belongs to the universal ribosomal protein uL13 family. Part of the 50S ribosomal subunit.

Functionally, this protein is one of the early assembly proteins of the 50S ribosomal subunit, although it is not seen to bind rRNA by itself. It is important during the early stages of 50S assembly. The chain is Large ribosomal subunit protein uL13 from Mycoplasmopsis synoviae (strain 53) (Mycoplasma synoviae).